The sequence spans 361 residues: Prostaglandin D2 receptor (361 aa).

At 1–21 the chain is on the extracellular side; it reads MRPLFYRCHNTTSVEKGNSAT. N-linked (GlcNAc...) asparagine glycosylation is present at Asn-10. Residues 22–42 traverse the membrane as a helical segment; the sequence is MGGVLFSTGLVGNLLALGLLA. The Cytoplasmic portion of the chain corresponds to 43-58; the sequence is RSGLGSCPPRSPRPPP. The helical transmembrane segment at 59 to 79 threads the bilayer; that stretch reads SVFYVLVFGLTITDLLGKCLV. Residues 80–107 are Extracellular-facing; the sequence is SPFVLSAYAQNRSLRELVPGSDSSLCQA. Asn-90 carries N-linked (GlcNAc...) asparagine glycosylation. A disulfide bridge connects residues Cys-105 and Cys-183. A helical membrane pass occupies residues 108-128; it reads FAFIMSFFGLASTLQLLAMAL. The Cytoplasmic segment spans residues 129-150; that stretch reads ECWLSLGHPFFHRRHLTPRRGA. The helical transmembrane segment at 151–171 threads the bilayer; it reads MVAPVVGAFCLAFCALPLVGF. Residues 172 to 195 are Extracellular-facing; that stretch reads GKFVQYCPGTWCFFQMVHEERSLS. Residues 196 to 216 traverse the membrane as a helical segment; that stretch reads VLSYSVLYASLMLLLVLAIVL. The Cytoplasmic portion of the chain corresponds to 217–262; that stretch reads CNLSAMRNLYAMHLRLRGLLRPGSRERAEPGAGEREATPLHLEELD. A helical membrane pass occupies residues 263–283; that stretch reads HLLLLALMTVLFTMCSLPLIY. Residues 284-310 lie on the Extracellular side of the membrane; that stretch reads RAYYGAFKAVPEQNGTTEETEDLRALR. Asn-297 is a glycosylation site (N-linked (GlcNAc...) asparagine). Residues 311–331 form a helical membrane-spanning segment; that stretch reads FLSVISIVDPWIFIIFRTSVF. At 332-361 the chain is on the cytoplasmic side; the sequence is RMFFRKIFIRPLIYRNWHSNSCQTNMESSL.

The protein belongs to the G-protein coupled receptor 1 family.

The protein localises to the cell membrane. Its function is as follows. Receptor for prostaglandin D2 (PGD2). The activity of this receptor is mainly mediated by G(s) proteins that stimulate adenylate cyclase, resulting in an elevation of intracellular cAMP. A mobilization of calcium is also observed, but without formation of inositol 1,4,5-trisphosphate. Involved in PLA2G3-dependent maturation of mast cells. PLA2G3 is secreted by immature mast cells and acts on nearby fibroblasts upstream to PTDGS to synthesize PGD2, which in turn promotes mast cell maturation and degranulation via PTGDR. The polypeptide is Prostaglandin D2 receptor (PTGDR) (Bos taurus (Bovine)).